Consider the following 284-residue polypeptide: L-ribulose-5-phosphate 3-epimerase UlaE (284 aa).

This sequence belongs to the L-ribulose-5-phosphate 3-epimerase family.

The enzyme catalyses L-ribulose 5-phosphate = L-xylulose 5-phosphate. Its pathway is cofactor degradation; L-ascorbate degradation; D-xylulose 5-phosphate from L-ascorbate: step 3/4. Functionally, catalyzes the isomerization of L-xylulose-5-phosphate to L-ribulose-5-phosphate. Is involved in the anaerobic L-ascorbate utilization. This is L-ribulose-5-phosphate 3-epimerase UlaE from Shigella sonnei (strain Ss046).